The sequence spans 179 residues: MAKLHDKYQETVVAELAKKFGYTSVMQVPRIEKITLNMGVGEAVADKKIMDHAVRDMTAIAGQKPVVTVARKSVAGFKIREGYPIGCKVTLRGERMWEFLERLVDIAIPRIRDFRGLSAKAFDGRGNYAMGVREQIIFPEIDYDKIDKIRGMDIVITTTAKNDEEGRALLDAFNFPFKK.

The protein belongs to the universal ribosomal protein uL5 family. As to quaternary structure, part of the 50S ribosomal subunit; part of the 5S rRNA/L5/L18/L25 subcomplex. Contacts the 5S rRNA and the P site tRNA. Forms a bridge to the 30S subunit in the 70S ribosome.

Its function is as follows. This is one of the proteins that bind and probably mediate the attachment of the 5S RNA into the large ribosomal subunit, where it forms part of the central protuberance. In the 70S ribosome it contacts protein S13 of the 30S subunit (bridge B1b), connecting the 2 subunits; this bridge is implicated in subunit movement. Contacts the P site tRNA; the 5S rRNA and some of its associated proteins might help stabilize positioning of ribosome-bound tRNAs. In Shewanella baltica (strain OS223), this protein is Large ribosomal subunit protein uL5.